Here is a 131-residue protein sequence, read N- to C-terminus: uncharacterized protein (131 aa).

This is an uncharacterized protein from Haemophilus influenzae (strain ATCC 51907 / DSM 11121 / KW20 / Rd).